Consider the following 201-residue polypeptide: Small ribosomal subunit protein uS4c (201 aa).

The interval 15–43 (LGALPGLTSKRPTPGSDLRNQSRSGKRSQ) is disordered. Positions 89–149 (MRLDNILFRL…DEQKSRALIQ (61 aa)) constitute an S4 RNA-binding domain.

Belongs to the universal ribosomal protein uS4 family. Part of the 30S ribosomal subunit. Contacts protein S5. The interaction surface between S4 and S5 is involved in control of translational fidelity.

It localises to the plastid. It is found in the chloroplast. One of the primary rRNA binding proteins, it binds directly to 16S rRNA where it nucleates assembly of the body of the 30S subunit. Functionally, with S5 and S12 plays an important role in translational accuracy. The polypeptide is Small ribosomal subunit protein uS4c (rps4) (Nandina domestica (Heavenly bamboo)).